The sequence spans 413 residues: RNA-binding protein 41 (413 aa).

The disordered stretch occupies residues 225–247 (SGSGTAEKPSLLQDKGKQAAQGK). The RRM domain maps to 309–387 (KVLYLKNLSP…KILVIEFAKS (79 aa)).

In terms of biological role, may bind RNA. This is RNA-binding protein 41 (Rbm41) from Mus musculus (Mouse).